Reading from the N-terminus, the 405-residue chain is Putative polysaccharide ligase RP358 (405 aa).

The next 10 membrane-spanning stretches (helical) occupy residues 23–43 (IAATVAFFLLSIIITGFISFI), 77–97 (LFTAWCFISCLFAVHPINSLV), 120–140 (VLYIKNSLILGIITAILLFFI), 156–178 (FGLYMLDRGCALLSITTWVAIII), 201–221 (ISDSLASFLGFSIGGIIFILA), 227–247 (IFFKLITISLITGSLLFPVIA), 270–290 (LFIWHFVANKIIIRPILGYGF), 322–342 (ILQITLELGILGLALFLCLVY), 353–375 (VSNFRAASYSCFINYYIIGMISY), and 377–397 (IWQTWWILSGIWILVLMKLLV).

The protein belongs to the O-antigen ligase family.

The protein localises to the membrane. This chain is Putative polysaccharide ligase RP358, found in Rickettsia prowazekii (strain Madrid E).